We begin with the raw amino-acid sequence, 295 residues long: Iron-sulfur cluster carrier protein (295 aa).

An ATP-binding site is contributed by 38–45 (GKGGVGKS).

Belongs to the Mrp/NBP35 ATP-binding proteins family. As to quaternary structure, homodimer.

Its function is as follows. Binds and transfers iron-sulfur (Fe-S) clusters to target apoproteins. Can hydrolyze ATP. This chain is Iron-sulfur cluster carrier protein, found in Pyrococcus furiosus (strain ATCC 43587 / DSM 3638 / JCM 8422 / Vc1).